The following is a 361-amino-acid chain: 45 kDa calcium-binding protein (361 aa).

The signal sequence occupies residues methionine 1–alanine 35. Residue asparagine 39 is glycosylated (N-linked (GlcNAc...) asparagine). EF-hand domains follow at residues arginine 97–glutamate 132 and glutamate 136–histidine 171. A Phosphoserine modification is found at serine 98. Residues aspartate 110, asparagine 112, aspartate 114, arginine 116, glutamate 121, aspartate 149, aspartate 151, aspartate 153, histidine 155, and glutamate 160 each coordinate Ca(2+). The residue at position 192 (threonine 192) is a Phosphothreonine. 4 EF-hand domains span residues leucine 196–glycine 231, methionine 232–asparagine 267, tryptophan 277–tyrosine 312, and asparagine 313–serine 348. Position 212 (aspartate 212) interacts with Ca(2+). Threonine 216 is subject to Phosphothreonine. Positions 219, 245, 247, 249, 251, and 256 each coordinate Ca(2+). The residue at position 264 (threonine 264) is a Phosphothreonine. 3 residues coordinate Ca(2+): aspartate 290, asparagine 292, and aspartate 294. Residue threonine 298 is modified to Phosphothreonine. Ca(2+)-binding residues include glutamate 301, aspartate 326, asparagine 328, asparagine 330, histidine 332, and glutamate 337. The segment at proline 308–phenylalanine 361 is necessary for intracellular retention in Golgi apparatus lumen.

This sequence belongs to the CREC family. A membrane-associated isoform interacts with STX3 and STXBP1. A membrane-associated isoform is expressed in acini of the pancreas (at protein level). Ubiquitous.

It localises to the golgi apparatus lumen. Functionally, a membrane-associated isoform may be involved in the exocytosis of zymogens by pancreatic acini. May regulate calcium-dependent activities in the endoplasmic reticulum lumen or post-ER compartment. This Rattus norvegicus (Rat) protein is 45 kDa calcium-binding protein (Sdf4).